The following is a 297-amino-acid chain: Acetyl-coenzyme A carboxylase carboxyl transferase subunit beta (297 aa).

The interval 1–23 is disordered; that stretch reads MSWIERILGRTSSSSSSSKSKVP. A CoA carboxyltransferase N-terminal domain is found at 26–295; the sequence is VWTKCTSCEQ…PFKTAELIVE (270 aa). Zn(2+) contacts are provided by Cys-30, Cys-33, Cys-49, and Cys-52. A C4-type zinc finger spans residues 30 to 52; it reads CTSCEQVLYSEELKRNMHVCPKC.

It belongs to the AccD/PCCB family. In terms of assembly, acetyl-CoA carboxylase is a heterohexamer composed of biotin carboxyl carrier protein (AccB), biotin carboxylase (AccC) and two subunits each of ACCase subunit alpha (AccA) and ACCase subunit beta (AccD). Zn(2+) is required as a cofactor.

It localises to the cytoplasm. The enzyme catalyses N(6)-carboxybiotinyl-L-lysyl-[protein] + acetyl-CoA = N(6)-biotinyl-L-lysyl-[protein] + malonyl-CoA. It participates in lipid metabolism; malonyl-CoA biosynthesis; malonyl-CoA from acetyl-CoA: step 1/1. Its function is as follows. Component of the acetyl coenzyme A carboxylase (ACC) complex. Biotin carboxylase (BC) catalyzes the carboxylation of biotin on its carrier protein (BCCP) and then the CO(2) group is transferred by the transcarboxylase to acetyl-CoA to form malonyl-CoA. This chain is Acetyl-coenzyme A carboxylase carboxyl transferase subunit beta, found in Actinobacillus pleuropneumoniae serotype 5b (strain L20).